The following is a 406-amino-acid chain: LIM/homeobox protein Lhx1 (406 aa).

LIM zinc-binding domains are found at residues Cys4–Asp54 and Cys63–Asp117. Disordered regions lie at residues Asn128 to Ile187 and Tyr293 to Gly374. The segment covering Ser137–Pro148 has biased composition (low complexity). Basic and acidic residues predominate over residues Asp151–Gly167. Ser162 is subject to Phosphoserine. The segment at residues Arg180 to Lys239 is a DNA-binding region (homeobox). Residues Pro315 to Leu327 show a composition bias toward low complexity. Positions Gly352–Pro362 are enriched in pro residues.

Interacts with LDB1 via the tandem LIM domains. As to expression, expressed in the brain, thymus, and tonsils. Expressed in samples from patients with chronic myeloid leukemia (CML) and in 58% of acute myeloid leukemia (AML) cell lines.

It localises to the nucleus. Its function is as follows. Potential transcription factor. May play a role in early mesoderm formation and later in lateral mesoderm differentiation and neurogenesis. The protein is LIM/homeobox protein Lhx1 (LHX1) of Homo sapiens (Human).